Here is a 1246-residue protein sequence, read N- to C-terminus: Stromal processing peptidase, chloroplastic (1246 aa).

A chloroplast-targeting transit peptide spans 1-136 (MASFPSPPLA…AKIRRRHVLH (136 aa)). His-228 serves as a coordination point for Zn(2+). The active-site Proton acceptor is Glu-231. Zn(2+) is bound at residue His-232. The active site involves Glu-302. A Zn(2+)-binding site is contributed by Glu-309.

The protein belongs to the peptidase M16 family. Zn(2+) is required as a cofactor. Widely expressed.

Its subcellular location is the plastid. The protein resides in the chloroplast stroma. Cleaves presequences (transit peptides) from chloroplastic protein precursors. Initially recognizes a precursor by binding to the C-terminus of its transit peptide and then removes the transit peptide in a single endoproteolytic step. In a next step, pursues the cleavage of transit peptide to a subfragment form. In Oryza sativa subsp. indica (Rice), this protein is Stromal processing peptidase, chloroplastic.